A 403-amino-acid chain; its full sequence is Ribosomal RNA large subunit methyltransferase I (403 aa).

The 80-residue stretch at 9–88 (YPRLILSKGR…ESIDIAFFTR (80 aa)) folds into the PUA domain.

This sequence belongs to the methyltransferase superfamily. RlmI family.

It localises to the cytoplasm. It carries out the reaction cytidine(1962) in 23S rRNA + S-adenosyl-L-methionine = 5-methylcytidine(1962) in 23S rRNA + S-adenosyl-L-homocysteine + H(+). Specifically methylates the cytosine at position 1962 (m5C1962) of 23S rRNA. The chain is Ribosomal RNA large subunit methyltransferase I from Salmonella paratyphi C (strain RKS4594).